We begin with the raw amino-acid sequence, 391 residues long: Cystathionine beta-lyase MetC (391 aa).

K196 bears the N6-(pyridoxal phosphate)lysine mark.

This sequence belongs to the trans-sulfuration enzymes family. Homotetramer. Pyridoxal 5'-phosphate serves as cofactor.

The enzyme catalyses L,L-cystathionine + H2O = L-homocysteine + pyruvate + NH4(+). It carries out the reaction an S-substituted L-cysteine + H2O = a thiol + pyruvate + NH4(+). It participates in amino-acid biosynthesis; L-methionine biosynthesis via de novo pathway; L-homocysteine from L-cystathionine: step 1/1. Cystathionine beta-lyase activity is inhibited by sweat components such as glycine, serine and ammonium sulfate. Inhibited by cystathionine at a concentration higher than 6 mM. Catalyzes the transformation of cystathionine into homocysteine. Can also catalyze, at low levels, the conversion of cystathionine into methionine and the conversion of methionine into methanethiol. This is Cystathionine beta-lyase MetC from Staphylococcus haemolyticus (strain JCSC1435).